Consider the following 288-residue polypeptide: Bis(5'-nucleosyl)-tetraphosphatase, symmetrical (288 aa).

Belongs to the Ap4A hydrolase family.

It catalyses the reaction P(1),P(4)-bis(5'-adenosyl) tetraphosphate + H2O = 2 ADP + 2 H(+). In terms of biological role, hydrolyzes diadenosine 5',5'''-P1,P4-tetraphosphate to yield ADP. The chain is Bis(5'-nucleosyl)-tetraphosphatase, symmetrical from Pseudomonas putida (strain ATCC 700007 / DSM 6899 / JCM 31910 / BCRC 17059 / LMG 24140 / F1).